The sequence spans 164 residues: Biotin carboxyl carrier protein of acetyl-CoA carboxylase (164 aa).

One can recognise a Biotinyl-binding domain in the interval 86-162 (GDFIVSPLVG…QFGSKLFRIV (77 aa)). N6-biotinyllysine is present on Lys-128.

Homodimer.

The protein operates within lipid metabolism; fatty acid biosynthesis. This protein is a component of the acetyl coenzyme A carboxylase complex; first, biotin carboxylase catalyzes the carboxylation of the carrier protein and then the transcarboxylase transfers the carboxyl group to form malonyl-CoA. The chain is Biotin carboxyl carrier protein of acetyl-CoA carboxylase (accB) from Chlamydia trachomatis serovar D (strain ATCC VR-885 / DSM 19411 / UW-3/Cx).